We begin with the raw amino-acid sequence, 413 residues long: Hemolin (413 aa).

The first 18 residues, 1–18 (MASKSLVVLSACIIIGSA), serve as a signal peptide directing secretion. Ig-like C2-type domains follow at residues 25–112 (PVLK…RVIS), 122–211 (PAKT…GEVR), 233–322 (PQYL…LKVT), and 327–413 (PKYV…VQVN). Disulfide bonds link cysteine 46/cysteine 97, cysteine 140/cysteine 199, cysteine 252/cysteine 305, and cysteine 349/cysteine 395. The N-linked (GlcNAc...) asparagine glycan is linked to asparagine 283.

It belongs to the hemolin family. In terms of tissue distribution, expressed in larval bristles.

Its subcellular location is the secreted. Its activity is regulated as follows. Increased activity in presence of phospholipids (low concentrations) and calcium ions. Inhibited by PMSF. Not affected by EDTA and E-64. Its function is as follows. Bristle toxin involved in caterpillar defense by participating in hemorrhagic syndrome characterized by a consumptive coagulopathy. Exhibits procoagulant activity through selective factor X proteolytic activation. Activates factor X in a dose- and time-dependent manner but does not activate gamma-carboxyglutamic acid domainless factor X. Its activity does not depend on calcium ions. Also functions as a growth stimulator and an inhibitor of cellular death for endothelial cells. In vitro, increases proliferation of human umbilical vein endothelial cells (HUVEC) and inhibits the apoptosis induced by starvation. Also increases slightly the complement decay-accelerating factor (CD55), which protects cells from complement-mediated lysis. On the other hand, does not alter the release or expression of von Willebrand factor (VWF), tissue factor (F3), intercellular adhesion molecule-1 (ICAM1), interleukin-8 (CXCL8), and prostacyclin. Does not show fibrinolytic or fibrinogenolytic activities. The protein is Hemolin of Lonomia obliqua (Moth).